Consider the following 94-residue polypeptide: Pyrimidine/purine nucleoside phosphorylase (94 aa).

The protein belongs to the nucleoside phosphorylase PpnP family.

It catalyses the reaction a purine D-ribonucleoside + phosphate = a purine nucleobase + alpha-D-ribose 1-phosphate. The catalysed reaction is adenosine + phosphate = alpha-D-ribose 1-phosphate + adenine. It carries out the reaction cytidine + phosphate = cytosine + alpha-D-ribose 1-phosphate. The enzyme catalyses guanosine + phosphate = alpha-D-ribose 1-phosphate + guanine. It catalyses the reaction inosine + phosphate = alpha-D-ribose 1-phosphate + hypoxanthine. The catalysed reaction is thymidine + phosphate = 2-deoxy-alpha-D-ribose 1-phosphate + thymine. It carries out the reaction uridine + phosphate = alpha-D-ribose 1-phosphate + uracil. The enzyme catalyses xanthosine + phosphate = alpha-D-ribose 1-phosphate + xanthine. Catalyzes the phosphorolysis of diverse nucleosides, yielding D-ribose 1-phosphate and the respective free bases. Can use uridine, adenosine, guanosine, cytidine, thymidine, inosine and xanthosine as substrates. Also catalyzes the reverse reactions. The polypeptide is Pyrimidine/purine nucleoside phosphorylase (Pseudomonas putida (strain W619)).